The following is a 483-amino-acid chain: MAEFTPITIAYGDGIGPEIMDAVLYILRQAEARISLETIEVGEKLYKKHYTSGISEESWNVIQRTGIILKAPITTPQSGGYKSLNVTIRKTLQLFANIRPAVSFHPFTRTLHPNLNLTIIRENEEDLYSGIEYRQTHNMYESLKLISHTGCKKIIRYAFEYAVKNNRKKVTCLSKDNIMKFSDGIFHRVFNEIAKEYPQIDNEHYIIDIGTAKLATTPEIFDIIVTSNLYGDIISDVAAEISGSVGLAGSANIGQHYAMFEAVHGSAPDIAGKGIANPSGLLNAAIMMLVHIGQGDIASLIENAWKKTIEDGVHTFDIYSEHSSSKKVCTKEFAEEVIKRLGQLPMTLPKASYPLIVKKQESKIEYKIDTTEVKKLVGTDIFINIHVFSAHDIADKINKLDIGNFELKTISSKGLKLWPHDLRFEIISDHWCCRFMNKDGTEIKHLDIIILLQALSKANIDFIKVENLFEFDGVACYSLAQGE.

Residue threonine 74 coordinates NADP(+). Positions 83, 85, 89, 99, and 121 each coordinate D-threo-isocitrate. Residue aspartate 232 coordinates Mg(2+). Residues 264–270 and asparagine 277 contribute to the NADP(+) site; that span reads HGSAPDI.

It belongs to the isocitrate and isopropylmalate dehydrogenases family. In terms of assembly, homodimer. Mg(2+) is required as a cofactor. It depends on Mn(2+) as a cofactor.

The catalysed reaction is D-threo-isocitrate + NADP(+) = 2-oxoglutarate + CO2 + NADPH. Functionally, catalyzes the oxidative decarboxylation of isocitrate to 2-oxoglutarate and carbon dioxide with the concomitant reduction of NADP(+). This Rickettsia typhi (strain ATCC VR-144 / Wilmington) protein is Isocitrate dehydrogenase [NADP] (icd).